The primary structure comprises 210 residues: MVQSCSAYGCKNRYDKDKPVSFHKFPLTRPSLCKQWEAAVRRKNFKPTKYSSICSEHFTPDCFKRECNNKLLKENAVPTIFLYIEPHEKKEELEPQEQLPSPSPPTSQVDAAVGLLMPPLQTPDNLSVFCDHNYTVEDTMHQRKRILHLEQQVEKLRKKLKTAQQRCRRQERQLEKLKEVVHFQREKDDASERGYVILPNDYFEIVEVPA.

A THAP-type zinc finger spans residues 5–57 (CSAYGCKNRYDKDKPVSFHKFPLTRPSLCKQWEAAVRRKNFKPTKYSSICSEH). The HCFC1-binding motif (HBM) signature appears at 131-134 (DHNY). Positions 140 to 187 (MHQRKRILHLEQQVEKLRKKLKTAQQRCRRQERQLEKLKEVVHFQREK) form a coiled coil.

Belongs to the THAP1 family. Interacts with PAWR. Component of a THAP1/THAP3-HCFC1-OGT complex that contains, either THAP1 or THAP3, HCFC1 and OGT. Interacts with OGT. Interacts (via the HBM) with HCFC1 (via the Kelch-repeat domain); the interaction recruits HCFC1 to the RRM1 promoter.

It localises to the nucleus. The protein localises to the nucleoplasm. Its subcellular location is the PML body. Functionally, DNA-binding transcription regulator that regulates endothelial cell proliferation and G1/S cell-cycle progression. Specifically binds the 5'-[AT]NTNN[GT]GGCA[AGT]-3' core DNA sequence and acts by modulating expression of pRB-E2F cell-cycle target genes, including RRM1. May also have pro-apoptotic activity by potentiating both serum-withdrawal and TNF-induced apoptosis. The sequence is that of THAP domain-containing protein 1 (Thap1) from Rattus norvegicus (Rat).